The chain runs to 230 residues: Ubiquitin carboxyl-terminal hydrolase isozyme L3 (230 aa).

The UCH catalytic domain occupies 5 to 229 (RWLPLEANPE…LRFNAIALSA (225 aa)). The segment at 8-13 (PLEANP) is interaction with ubiquitin. Cysteine 95 functions as the Nucleophile in the catalytic mechanism. Position 130 is a phosphoserine (serine 130). An interaction with ubiquitin. Crossover loop which restricts access of large ubiquitin adducts to the active site region spans residues 152–159 (AHEGQTEA). The active-site Proton donor is the histidine 169. Residues 219-224 (ELRFNA) form an interaction with ubiquitin region.

This sequence belongs to the peptidase C12 family. As to quaternary structure, preferentially binds diubiquitin; the interaction does not hydrolyze diubiquitin but, in vitro, inhibits the hydrolyzing activity on other substrates. Highly expressed in heart, skeletal muscle, and testis.

The protein localises to the cytoplasm. The enzyme catalyses Thiol-dependent hydrolysis of ester, thioester, amide, peptide and isopeptide bonds formed by the C-terminal Gly of ubiquitin (a 76-residue protein attached to proteins as an intracellular targeting signal).. Its activity is regulated as follows. Inhibited by monoubiquitin and diubiquitin. Deubiquitinating enzyme (DUB) that controls levels of cellular ubiquitin through processing of ubiquitin precursors and ubiquitinated proteins. Thiol protease that recognizes and hydrolyzes a peptide bond at the C-terminal glycine of either ubiquitin or NEDD8. Has a 10-fold preference for Arg and Lys at position P3'', and exhibits a preference towards 'Lys-48'-linked ubiquitin chains. Deubiquitinates ENAC in apical compartments, thereby regulating apical membrane recycling. Indirectly increases the phosphorylation of IGFIR, AKT and FOXO1 and promotes insulin-signaling and insulin-induced adipogenesis. Required for stress-response retinal, skeletal muscle and germ cell maintenance. May be involved in working memory. Can hydrolyze UBB(+1), a mutated form of ubiquitin which is not effectively degraded by the proteasome and is associated with neurogenerative disorders. The polypeptide is Ubiquitin carboxyl-terminal hydrolase isozyme L3 (UCHL3) (Homo sapiens (Human)).